A 655-amino-acid chain; its full sequence is MAKGGEALPQGSPAPVQDPHLIKVTVKTPKDKEDFSVTDTCTIQQLKEEISQRFKAHPDQLVLIFAGKILKDPDSLAQCGVRDGLTVHLVIKRQHRAMGNECPAASVPTQGPSPGSLPQPSSIYPADGPPAFSLGLLTGLSRLGLAYRGFPDQPSSLMRQHVSVPEFVTQLIDDPFIPGLLSNTGLVRQLVLDNPHMQQLIQHNPEIGHILNNPEIMRQTLEFLRNPAMMQEMIRSQDRVLSNLESIPGGYNVLCTMYTDIMDPMLNAVQEQFGGNPFATATTDNATTTTSQPSRMENCDPLPNPWTSTHGGSGSRQGRQDGDQDAPDIRNRFPNFLGIIRLYDYLQQLHENPQSLGTYLQGTASALSQSQEPPPSVNRVPPSSPSSQEPGSGQPLPEESVAIKGRSSCPAFLRYPTENSTGQGGDQDGAGKSSTGHSTNLPDLVSGLGDSANRVPFAPLSFSPTAAIPGIPEPPWLPSPAYPRSLRPDGMNPAPQLQDEIQPQLPLLMHLQAAMANPRALQALRQIEQGLQVLATEAPRLLLWFMPCLAGTGSVAGGIESREDPLMSEDPLPNPPPEVFPALDSAELGFLSPPFLHMLQDLVSTNPQQLQPEAHFQVQLEQLRSMGFLNREANLQALIATGGDVDAAVEKLRQS.

Residues 22–98 enclose the Ubiquitin-like domain; it reads IKVTVKTPKD…LVIKRQHRAM (77 aa). The interval 102 to 124 is disordered; sequence CPAASVPTQGPSPGSLPQPSSIY. The segment covering 110 to 122 has biased composition (low complexity); the sequence is QGPSPGSLPQPSS. The region spanning 194-233 is the STI1 domain; that stretch reads NPHMQQLIQHNPEIGHILNNPEIMRQTLEFLRNPAMMQEM. Disordered stretches follow at residues 277–330, 364–399, and 412–447; these read PFAT…PDIR, ASAL…LPEE, and FLRY…LVSG. The segment covering 279 to 290 has biased composition (low complexity); it reads ATATTDNATTTT. Residues 318 to 330 are compositionally biased toward basic and acidic residues; sequence GRQDGDQDAPDIR. Over residues 377–395 the composition is skewed to low complexity; it reads VNRVPPSSPSSQEPGSGQP. Over residues 432 to 441 the composition is skewed to polar residues; that stretch reads KSSTGHSTNL. Positions 609 to 655 constitute a UBA domain; the sequence is QLQPEAHFQVQLEQLRSMGFLNREANLQALIATGGDVDAAVEKLRQS.

Testis specific.

The protein is Ubiquilin-3 (UBQLN3) of Homo sapiens (Human).